Reading from the N-terminus, the 482-residue chain is UDP-N-acetylmuramate--L-alanine ligase (482 aa).

123–129 (GTHGKTT) provides a ligand contact to ATP.

It belongs to the MurCDEF family.

It is found in the cytoplasm. The enzyme catalyses UDP-N-acetyl-alpha-D-muramate + L-alanine + ATP = UDP-N-acetyl-alpha-D-muramoyl-L-alanine + ADP + phosphate + H(+). Its pathway is cell wall biogenesis; peptidoglycan biosynthesis. In terms of biological role, cell wall formation. The sequence is that of UDP-N-acetylmuramate--L-alanine ligase from Pseudomonas putida (strain GB-1).